A 357-amino-acid chain; its full sequence is 3-dehydroquinate synthase (357 aa).

NAD(+) contacts are provided by residues 104-108 (GVVGD), 128-129 (TT), Lys-141, and 168-171 (FLET). Zn(2+)-binding residues include Glu-183, His-243, and His-260.

This sequence belongs to the sugar phosphate cyclases superfamily. Dehydroquinate synthase family. NAD(+) is required as a cofactor. It depends on Co(2+) as a cofactor. Zn(2+) serves as cofactor.

It localises to the cytoplasm. It carries out the reaction 7-phospho-2-dehydro-3-deoxy-D-arabino-heptonate = 3-dehydroquinate + phosphate. Its pathway is metabolic intermediate biosynthesis; chorismate biosynthesis; chorismate from D-erythrose 4-phosphate and phosphoenolpyruvate: step 2/7. Functionally, catalyzes the conversion of 3-deoxy-D-arabino-heptulosonate 7-phosphate (DAHP) to dehydroquinate (DHQ). This Streptococcus pyogenes serotype M18 (strain MGAS8232) protein is 3-dehydroquinate synthase.